The chain runs to 233 residues: Lipoprotein-releasing system ATP-binding protein LolD (233 aa).

One can recognise an ABC transporter domain in the interval 7–233 (IHCEKLSKTY…QLQSESERNH (227 aa)). 43-50 (GASGAGKS) contacts ATP.

It belongs to the ABC transporter superfamily. Lipoprotein translocase (TC 3.A.1.125) family. The complex is composed of two ATP-binding proteins (LolD) and two transmembrane proteins (LolC and LolE).

It is found in the cell inner membrane. Part of the ABC transporter complex LolCDE involved in the translocation of mature outer membrane-directed lipoproteins, from the inner membrane to the periplasmic chaperone, LolA. Responsible for the formation of the LolA-lipoprotein complex in an ATP-dependent manner. This is Lipoprotein-releasing system ATP-binding protein LolD from Coxiella burnetii (strain RSA 493 / Nine Mile phase I).